A 652-amino-acid polypeptide reads, in one-letter code: DNA ligase (652 aa).

NAD(+) contacts are provided by residues 29–33 (DAEYD), 78–79 (SL), and Glu-107. Lys-109 functions as the N6-AMP-lysine intermediate in the catalytic mechanism. Residues Arg-130, Glu-164, Lys-278, and Lys-302 each contribute to the NAD(+) site. The Zn(2+) site is built by Cys-395, Cys-398, Cys-413, and Cys-418. In terms of domain architecture, BRCT spans 577 to 652 (TDDAILSGKT…VKDEAWLLDL (76 aa)).

The protein belongs to the NAD-dependent DNA ligase family. LigA subfamily. The cofactor is Mg(2+). Requires Mn(2+) as cofactor.

It catalyses the reaction NAD(+) + (deoxyribonucleotide)n-3'-hydroxyl + 5'-phospho-(deoxyribonucleotide)m = (deoxyribonucleotide)n+m + AMP + beta-nicotinamide D-nucleotide.. DNA ligase that catalyzes the formation of phosphodiester linkages between 5'-phosphoryl and 3'-hydroxyl groups in double-stranded DNA using NAD as a coenzyme and as the energy source for the reaction. It is essential for DNA replication and repair of damaged DNA. In Streptococcus thermophilus (strain ATCC BAA-491 / LMD-9), this protein is DNA ligase.